The following is a 126-amino-acid chain: MQTTMLKAKLHRARVTHSELEYEGSCAIDGSLLDCAGIREYEQIQIYNVNNGERFTTYAIRAADGSGTISVNGAAARLAAVGDIVIICAYVGLNQAELAAYRPNLVYVDENNQITRTSHAIPVQAA.

S25 functions as the Schiff-base intermediate with substrate; via pyruvic acid in the catalytic mechanism. Residue S25 is modified to Pyruvic acid (Ser). T57 lines the substrate pocket. The active-site Proton donor is the Y58. Residue 73–75 (GAA) participates in substrate binding.

The protein belongs to the PanD family. As to quaternary structure, heterooctamer of four alpha and four beta subunits. Pyruvate serves as cofactor. In terms of processing, is synthesized initially as an inactive proenzyme, which is activated by self-cleavage at a specific serine bond to produce a beta-subunit with a hydroxyl group at its C-terminus and an alpha-subunit with a pyruvoyl group at its N-terminus.

The protein resides in the cytoplasm. It catalyses the reaction L-aspartate + H(+) = beta-alanine + CO2. It participates in cofactor biosynthesis; (R)-pantothenate biosynthesis; beta-alanine from L-aspartate: step 1/1. Its function is as follows. Catalyzes the pyruvoyl-dependent decarboxylation of aspartate to produce beta-alanine. The polypeptide is Aspartate 1-decarboxylase (Methylococcus capsulatus (strain ATCC 33009 / NCIMB 11132 / Bath)).